Reading from the N-terminus, the 68-residue chain is Large ribosomal subunit protein uL29 (68 aa).

It belongs to the universal ribosomal protein uL29 family.

The sequence is that of Large ribosomal subunit protein uL29 from Chloroflexus aurantiacus (strain ATCC 29364 / DSM 637 / Y-400-fl).